The primary structure comprises 327 residues: MATRIEFHKHGGPEVLQTVEFTPAEPAEHEIQVENKAIGINFIDTYIRSGLYPPPSLPAGLGTEAAGVVSKVGNGVEHIRVGDRVVYAQSTLGAYSSVHNVTADKAAILPDAISFEQAAASFLKGLTVFYLLRKTYEVKPDEPFLFHAAAGGVGLIACQWAKALGAKLIGTVGSAQKAQRALDAGAWQVINYREESIVERVKEITGGKKVRVVYDSVGKDTWEASLDCLQRRGLMVSFGNASGPVTGVNLGILNQKGSLYATRPSLQGYITTREELTEASNELFSLIASGVIKVDVAENQRYALKDARRAHEVLESRATQGSSLLIP.

It belongs to the zinc-containing alcohol dehydrogenase family. Quinone oxidoreductase subfamily. As to quaternary structure, homodimer.

The enzyme catalyses 2 a quinone + NADPH + H(+) = 2 a 1,4-benzosemiquinone + NADP(+). The sequence is that of Quinone oxidoreductase (qor) from Salmonella typhimurium (strain LT2 / SGSC1412 / ATCC 700720).